Reading from the N-terminus, the 245-residue chain is tRNA pseudouridine synthase A (245 aa).

The active-site Nucleophile is the D52. Residue Y111 participates in substrate binding.

It belongs to the tRNA pseudouridine synthase TruA family. As to quaternary structure, homodimer.

The catalysed reaction is uridine(38/39/40) in tRNA = pseudouridine(38/39/40) in tRNA. Its function is as follows. Formation of pseudouridine at positions 38, 39 and 40 in the anticodon stem and loop of transfer RNAs. This chain is tRNA pseudouridine synthase A, found in Rickettsia prowazekii (strain Madrid E).